Consider the following 380-residue polypeptide: Alpha-N-acetylneuraminate alpha-2,8-sialyltransferase ST8SIA3 (380 aa).

Residues 1–9 (MRNCKMARV) lie on the Cytoplasmic side of the membrane. A helical; Signal-anchor for type II membrane protein transmembrane segment spans residues 10–33 (ASVLGLVMLSVALLNLSLISYVSL). The Lumenal segment spans residues 34–380 (KKENIFATPK…LTKLTLSHCA (347 aa)). N-linked (GlcNAc...) asparagine glycosylation is found at N93 and N113. 2 cysteine pairs are disulfide-bonded: C162-C313 and C176-C379. CMP-N-acetyl-beta-neuraminate-binding residues include N167 and N190. N206 carries an N-linked (GlcNAc...) asparagine glycan. 6 residues coordinate CMP-N-acetyl-beta-neuraminate: S300, T301, G302, W322, Y336, and H337. The Proton donor/acceptor role is filled by H354.

It belongs to the glycosyltransferase 29 family. As to quaternary structure, homodimer. Autopolysialylated.

It is found in the golgi apparatus membrane. It catalyses the reaction [N-acetyl-alpha-D-neuraminosyl-(2-&gt;8)](n) + CMP-N-acetyl-beta-neuraminate = [N-acetyl-alpha-D-neuraminosyl-(2-&gt;8)](n+1) + CMP + H(+). It carries out the reaction alpha-Neu5Ac-(2-&gt;3)-beta-D-Gal-(1-&gt;4)-6S-D-GlcNAc + CMP-N-acetyl-beta-neuraminate = alpha-Neu5Ac-(2-&gt;8)-alpha-Neu5Ac-(2-&gt;3)-beta-D-Gal-(1-&gt;4)-6S-D-GlcNAc + CMP + H(+). The catalysed reaction is a ganglioside GM3 (d18:1(4E)) + CMP-N-acetyl-beta-neuraminate = a ganglioside GD3 (d18:1(4E)) + CMP + H(+). The enzyme catalyses a ganglioside GM3 + CMP-N-acetyl-beta-neuraminate = a ganglioside GD3 + CMP + H(+). It catalyses the reaction an N-acetyl-alpha-neuraminyl-(2-&gt;3)-beta-D-galactosyl derivative + CMP-N-acetyl-beta-neuraminate = an N-acetyl-alpha-neuraminyl-(2-&gt;8)-N-acetyl-alpha-neuraminyl-(2-&gt;3)-beta-D-galactosyl derivative + CMP + H(+). It carries out the reaction an N-acetyl-alpha-neuraminyl-(2-&gt;3)-beta-D-galactosyl-(1-&gt;4)-N-acetyl-beta-D-glucosaminyl derivative + CMP-N-acetyl-beta-neuraminate = an alpha-Neu5Ac-(2-&gt;8)-alpha-Neu5Ac-(2-&gt;3)-beta-D-Gal-(1-&gt;4)-beta-D-GlcNAc derivative + CMP + H(+). The protein operates within protein modification; protein glycosylation. Catalyzes the transfer of sialic acid from a CMP-linked sialic acid donor onto a terminal alpha-2,3-, alpha-2,6-, or alpha-2,8-linked sialic acid of an acceptor, such as N-linked oligosaccharides of glycoproteins and glycolipids through alpha-2,8-linkages. Forms oligosialic and polysialic acid on various sialylated N-acetyllactosamine oligosaccharides of glycoproteins, including FETUB N-glycans, a2-HS-glycoprotein (AHSG) and alpha 2,3-sialylated glycosphingolipids, such as alpha 2,3-sialylparagloboside and ganglioside GM3 and to a lesser extent NCAM1 N-glycans. However, it is much more specific to N-linked oligosaccharides of glycoproteins than glycosphingolipids. 2,3-sialylparagloboside serves as the best acceptor substrate among the glycolipids. alpha-Neu5Ac-(2-&gt;8)-alpha-Neu5Ac-(2-&gt;3)-beta-D-Gal-(1-&gt;4)-6S-D-GlcNAc and monosialyl and disialyl N-acetyllactosamines are the best acceptor substrates among glycoproteins. May plays critical role in the striatum by mediating the formation of disialylated and trisialylated terminal glycotopes on N- and O-glycans of specific striatal proteins, regulating their distribution in lipid rafts, affecting their interaction with other binding partners, and subsequently modulating striatal functions. This is Alpha-N-acetylneuraminate alpha-2,8-sialyltransferase ST8SIA3 from Pan troglodytes (Chimpanzee).